A 104-amino-acid polypeptide reads, in one-letter code: Hydrogen cyanide synthase subunit HcnA (104 aa).

Residues 16–97 (ADMTIHLNGQ…GMRVETESNR (82 aa)) form the 2Fe-2S ferredoxin-type domain. [2Fe-2S] cluster is bound by residues C60, C65, C68, and C81.

In terms of assembly, heterotrimer of HcnA, HcnB and HcnC.

Its subcellular location is the cell membrane. The enzyme catalyses glycine + 2 A = hydrogen cyanide + 2 AH2 + CO2. Oxygen is necessary for cyanogenesis. Activated by succinate, glycine methyl ester, glucose and D,L-methionine in addition to glycine. Phenazine methosulfate, methylene blue, 2,6-dichlorophenolindophenol (DCIP) and ferricyanide can replace oxygen for the reaction. Inhibited by pyrrolnitrin and acriflavine at 1 mM concentration. In terms of biological role, a three-component membrane-bound flavoenzyme that catalyzes the formation of hydrogen cyanide, a secondary metabolite, by transfer of electrons to a cyanide-resistant branch of the aerobic respiratory chain. This Pseudomonas aeruginosa (strain ATCC 15692 / DSM 22644 / CIP 104116 / JCM 14847 / LMG 12228 / 1C / PRS 101 / PAO1) protein is Hydrogen cyanide synthase subunit HcnA.